A 544-amino-acid chain; its full sequence is NEDD4-binding protein 3 (544 aa).

4 disordered regions span residues Leu-61–Ala-84, Ser-116–Cys-252, Lys-335–Glu-365, and Gln-430–Ala-465. Ser-176 is subject to Phosphoserine. A compositionally biased stretch (low complexity) spans Pro-186–Leu-222. A coiled-coil region spans residues Leu-294–Glu-530.

The protein belongs to the N4BP3 family. In terms of assembly, binds NEDD4. Interacts with 14-3-3 proteins. Interacts with MAVS.

Its subcellular location is the cytoplasmic vesicle. It is found in the cell projection. It localises to the axon. The protein resides in the dendrite. Functionally, plays a positive role in the antiviral innate immune signaling pathway. Mechanistically, interacts with MAVS and functions as a positive regulator to promote 'Lys-63'-linked polyubiquitination of MAVS and thus strengthens the interaction between MAVS and TRAF2. Also plays a role in axon and dendrite arborization during cranial nerve development. May also be important for neural crest migration and early development of other anterior structures including eye, brain and cranial cartilage. The sequence is that of NEDD4-binding protein 3 (N4BP3) from Homo sapiens (Human).